Here is a 587-residue protein sequence, read N- to C-terminus: Pentatricopeptide repeat-containing protein OGR1, mitochondrial (587 aa).

The N-terminal 30 residues, 1–30, are a transit peptide targeting the mitochondrion; sequence MSVSAAARHLESLLPRLASLRHYLQFHARL. 8 PPR repeats span residues 145–179, 200–203, 217–251, 252–286, 287–315, 319–349, 351–381, and 383–417; these read DVRLLTTLLDSYAKCGDLASARKVFDEMTVRDVAT, FHRL, NEVTIVAALSACAQIGLLKDGMYVHEFAKRFGLDR, NVRVCNSLIDMYSKCGSLSRALDVFHSIKPEDQTL, VSYNAAIQAHSMHGHGGDALRLFDEMPTR, DGVTYLAVLCGCNHSGLVDDGLRVFNSMRVA, NMKHYGTIVDLLGRAGRLTEAYDTVISMPFP, and DIVLWQTLLGAAKMHGVVELAELAANKLAELGSNV. The interval 386–461 is type E motif; sequence LWQTLLGAAK…VPGFSYTEID (76 aa). A type E(+) motif region spans residues 462–492; it reads GVMHKFINGDKEHPRWQEIYRALEDIVSRIS. Residues 493–587 form a type DYW motif region; the sequence is ELGYEPETSN…DGQCSCRDYW (95 aa).

The protein localises to the mitochondrion. Functionally, involved in multiple sites RNA editing events in mitochondria. Essential for C-to-U RNA editing at seven specific sites of nad2, nad4, cox2, cox3 and ccmC transcripts, all coding for proteins involved in the mitochondrial electron transport chain coupled to ATP generation. Required for normal growth and development. This chain is Pentatricopeptide repeat-containing protein OGR1, mitochondrial, found in Oryza sativa subsp. japonica (Rice).